Here is a 289-residue protein sequence, read N- to C-terminus: Palmitoyl-protein thioesterase 3 (289 aa).

The signal sequence occupies residues 1–20; it reads MRILSSLILLIALAIALVSA. Ser97 is a catalytic residue. Residues Asn189 and Asn195 are each glycosylated (N-linked (GlcNAc...) asparagine). Active-site residues include Asp210 and His266. Asn281 is a glycosylation site (N-linked (GlcNAc...) asparagine).

Belongs to the palmitoyl-protein thioesterase family.

It is found in the lysosome. It carries out the reaction S-hexadecanoyl-L-cysteinyl-[protein] + H2O = L-cysteinyl-[protein] + hexadecanoate + H(+). In terms of biological role, removes thioester-linked fatty acyl groups such as palmitate from modified cysteine residues in proteins or peptides during lysosomal degradation. The chain is Palmitoyl-protein thioesterase 3 (ppt3) from Dictyostelium discoideum (Social amoeba).